Consider the following 366-residue polypeptide: Anhydro-N-acetylmuramic acid kinase (366 aa).

Residue 12–19 (GTSMDGAD) participates in ATP binding.

The protein belongs to the anhydro-N-acetylmuramic acid kinase family.

It catalyses the reaction 1,6-anhydro-N-acetyl-beta-muramate + ATP + H2O = N-acetyl-D-muramate 6-phosphate + ADP + H(+). It participates in amino-sugar metabolism; 1,6-anhydro-N-acetylmuramate degradation. It functions in the pathway cell wall biogenesis; peptidoglycan recycling. Its function is as follows. Catalyzes the specific phosphorylation of 1,6-anhydro-N-acetylmuramic acid (anhMurNAc) with the simultaneous cleavage of the 1,6-anhydro ring, generating MurNAc-6-P. Is required for the utilization of anhMurNAc either imported from the medium or derived from its own cell wall murein, and thus plays a role in cell wall recycling. In Neisseria meningitidis serogroup C (strain 053442), this protein is Anhydro-N-acetylmuramic acid kinase.